Reading from the N-terminus, the 1338-residue chain is Aldehyde oxidase 1 (1338 aa).

The region spanning Ser-5–Ile-92 is the 2Fe-2S ferredoxin-type domain. Positions 113 and 151 each coordinate Mo-molybdopterin. Positions Phe-236 to Lys-421 constitute an FAD-binding PCMH-type domain. FAD is bound by residues Val-264–Val-271, Ala-345, Ser-354, His-358, Asp-367, and Leu-411. Residues Ala-806–Phe-807 and Met-1047 each bind Mo-molybdopterin. Ser-1068 is subject to Phosphoserine. Mo-molybdopterin contacts are provided by residues Gly-1088–Val-1091, Gln-1203, and Leu-1268. Glu-1270 acts as the Proton acceptor; for azaheterocycle hydroxylase activity in catalysis.

Belongs to the xanthine dehydrogenase family. Homodimer. [2Fe-2S] cluster serves as cofactor. FAD is required as a cofactor. It depends on Mo-molybdopterin as a cofactor. As to expression, detected at high levels in liver, also detected in lung, kidney, lacrimal gland and olfactory mucosa.

It localises to the cytoplasm. The enzyme catalyses an aldehyde + O2 + H2O = a carboxylate + H2O2 + H(+). The catalysed reaction is retinal + O2 + H2O = retinoate + H2O2 + H(+). In terms of biological role, oxidase with broad substrate specificity, oxidizing aromatic azaheterocycles, such as N1-methylnicotinamide, N-methylphthalazinium and phthalazine, as well as aldehydes, such as benzaldehyde, retinal, pyridoxal, and vanillin. Plays a key role in the metabolism of xenobiotics and drugs containing aromatic azaheterocyclic substituents. Participates in the bioactivation of prodrugs such as famciclovir, catalyzing the oxidation step from 6-deoxypenciclovir to penciclovir, which is a potent antiviral agent. Is probably involved in the regulation of reactive oxygen species homeostasis. May be a prominent source of superoxide generation via the one-electron reduction of molecular oxygen. May also catalyze nitric oxide (NO) production via the reduction of nitrite to NO with NADH or aldehyde as electron donor. May play a role in adipogenesis. In Macaca fascicularis (Crab-eating macaque), this protein is Aldehyde oxidase 1 (AOX1).